The primary structure comprises 423 residues: Mannose-6-phosphate isomerase (423 aa).

Alanine 2 is modified (N-acetylalanine). A phosphoserine mark is found at serine 102 and serine 108. Residues glutamine 110, histidine 112, glutamate 137, and histidine 276 each contribute to the Zn(2+) site. Residue arginine 295 is part of the active site.

It belongs to the mannose-6-phosphate isomerase type 1 family. Requires Zn(2+) as cofactor. In terms of tissue distribution, expressed in all tissues, but more abundant in heart, brain and skeletal muscle.

It is found in the cytoplasm. The catalysed reaction is D-mannose 6-phosphate = D-fructose 6-phosphate. It functions in the pathway nucleotide-sugar biosynthesis; GDP-alpha-D-mannose biosynthesis; alpha-D-mannose 1-phosphate from D-fructose 6-phosphate: step 1/2. Its function is as follows. Isomerase that catalyzes the interconversion of fructose-6-P and mannose-6-P and has a critical role in the supply of D-mannose derivatives required for many eukaryotic glycosylation reactions. This Homo sapiens (Human) protein is Mannose-6-phosphate isomerase.